We begin with the raw amino-acid sequence, 397 residues long: Acetate kinase (397 aa).

Position 7 (N7) interacts with Mg(2+). K14 provides a ligand contact to ATP. R91 contacts substrate. D147 serves as the catalytic Proton donor/acceptor. ATP contacts are provided by residues H207–G211, D282–R284, and G330–N334. E383 serves as a coordination point for Mg(2+).

It belongs to the acetokinase family. In terms of assembly, homodimer. Mg(2+) serves as cofactor. The cofactor is Mn(2+).

It is found in the cytoplasm. The enzyme catalyses acetate + ATP = acetyl phosphate + ADP. It functions in the pathway metabolic intermediate biosynthesis; acetyl-CoA biosynthesis; acetyl-CoA from acetate: step 1/2. In terms of biological role, catalyzes the formation of acetyl phosphate from acetate and ATP. Can also catalyze the reverse reaction. The chain is Acetate kinase from Moorella thermoacetica (strain ATCC 39073 / JCM 9320).